The following is a 428-amino-acid chain: MSNIVIVGAQWGDEGKGKIADTLAEKADLVVRYQGGNNAGHTLVVNGKKTFLHLIPSGVLHQHTKCVIGHGVVLDPVALDEEITRLQAKGIAISAENLFVSESCTIITSYHKLLDAVRESNTSEKIGTTGKGIGPAYEDKVSRKGIKFKHLFDKDLLRSRLAISLAEKETLFRDLYKVEYPTLEQEFDKLFALGQKLKQYAADTFSIIDQAIAAGKNVVYEGAQGVLLDVDYGTYPFVTSSNTSVAGVYSGATTAGHGLDHVIGITKAYTTRVGEGPFPTELFDDVGKFIQHKGGEIGVTTGRIRRCGWLDLPLLKYSAKCSNLTSIALTKVDVLSDMDTLKVCIGYKYEGKEIYCAYPGIDLYKVEPILVEMEPFSIDETVTKDNMPAALKTYLKTIENHVGIPISSLAYGPSREQILFFEDYFKKG.

Residues 12-18 (GDEGKGK) and 40-42 (GHT) contribute to the GTP site. The Proton acceptor role is filled by Asp-13. 2 residues coordinate Mg(2+): Asp-13 and Gly-40. Residues 13-16 (DEGK), 38-41 (NAGH), Thr-129, Arg-143, Gln-224, Thr-239, and Arg-303 contribute to the IMP site. Residue His-41 is the Proton donor of the active site. 299-305 (VTTGRIR) is a binding site for substrate. Residues Arg-305, 331–333 (KVD), and 410–412 (AYG) each bind GTP.

The protein belongs to the adenylosuccinate synthetase family. In terms of assembly, homodimer. Requires Mg(2+) as cofactor.

Its subcellular location is the cytoplasm. It catalyses the reaction IMP + L-aspartate + GTP = N(6)-(1,2-dicarboxyethyl)-AMP + GDP + phosphate + 2 H(+). It functions in the pathway purine metabolism; AMP biosynthesis via de novo pathway; AMP from IMP: step 1/2. Its function is as follows. Plays an important role in the de novo pathway of purine nucleotide biosynthesis. Catalyzes the first committed step in the biosynthesis of AMP from IMP. The chain is Adenylosuccinate synthetase from Francisella tularensis subsp. holarctica (strain FTNF002-00 / FTA).